Consider the following 129-residue polypeptide: uncharacterized protein (129 aa).

Helical transmembrane passes span 35–55 (IVDG…WKIP) and 98–118 (ILLL…IILL).

Its subcellular location is the membrane. This is an uncharacterized protein from Saccharomyces cerevisiae (strain ATCC 204508 / S288c) (Baker's yeast).